The following is a 231-amino-acid chain: U1 small nuclear ribonucleoprotein C-1 (231 aa).

The segment at 4 to 36 (YYCDYCDTYLTHDSPSVRKQHNAGYKHKANVRT) adopts a Matrin-type zinc-finger fold. Composition is skewed to pro residues over residues 117-127 (APGIPGYPGGP), 134-159 (GAPP…PPGS), and 167-178 (LPRPPTLPPPTS). The segment at 117–231 (APGIPGYPGG…SYAQPSEGNH (115 aa)) is disordered. The segment covering 181-193 (PGAPIPNSAAPPA) has biased composition (low complexity). Residues 199–217 (PPAPAGPTSGAPPAPPTAP) are compositionally biased toward pro residues.

It belongs to the U1 small nuclear ribonucleoprotein C family. U1 snRNP is composed of the 7 core Sm proteins B/B', D1, D2, D3, E, F and G that assemble in a heptameric protein ring on the Sm site of the small nuclear RNA to form the core snRNP, and at least 3 U1 snRNP-specific proteins U1-70K, U1-A and U1-C. U1-C interacts with U1 snRNA and the 5' splice-site region of the pre-mRNA.

Its subcellular location is the nucleus. In terms of biological role, component of the spliceosomal U1 snRNP, which is essential for recognition of the pre-mRNA 5' splice-site and the subsequent assembly of the spliceosome. U1-C is directly involved in initial 5' splice-site recognition for both constitutive and regulated alternative splicing. The interaction with the 5' splice-site seems to precede base-pairing between the pre-mRNA and the U1 snRNA. Stimulates commitment or early (E) complex formation by stabilizing the base pairing of the 5' end of the U1 snRNA and the 5' splice-site region. In Sorghum bicolor (Sorghum), this protein is U1 small nuclear ribonucleoprotein C-1.